Consider the following 492-residue polypeptide: Protein nucleotidyltransferase YdiU (492 aa).

ATP is bound by residues glycine 88, glycine 90, arginine 91, lysine 111, aspartate 123, glycine 124, arginine 174, and arginine 181. The active-site Proton acceptor is aspartate 250. Residues asparagine 251 and aspartate 260 each contribute to the Mg(2+) site. Aspartate 260 serves as a coordination point for ATP.

Belongs to the SELO family. It depends on Mg(2+) as a cofactor. Requires Mn(2+) as cofactor.

It catalyses the reaction L-seryl-[protein] + ATP = 3-O-(5'-adenylyl)-L-seryl-[protein] + diphosphate. The catalysed reaction is L-threonyl-[protein] + ATP = 3-O-(5'-adenylyl)-L-threonyl-[protein] + diphosphate. The enzyme catalyses L-tyrosyl-[protein] + ATP = O-(5'-adenylyl)-L-tyrosyl-[protein] + diphosphate. It carries out the reaction L-histidyl-[protein] + UTP = N(tele)-(5'-uridylyl)-L-histidyl-[protein] + diphosphate. It catalyses the reaction L-seryl-[protein] + UTP = O-(5'-uridylyl)-L-seryl-[protein] + diphosphate. The catalysed reaction is L-tyrosyl-[protein] + UTP = O-(5'-uridylyl)-L-tyrosyl-[protein] + diphosphate. Nucleotidyltransferase involved in the post-translational modification of proteins. It can catalyze the addition of adenosine monophosphate (AMP) or uridine monophosphate (UMP) to a protein, resulting in modifications known as AMPylation and UMPylation. This Rhodopseudomonas palustris (strain TIE-1) protein is Protein nucleotidyltransferase YdiU.